The following is a 122-amino-acid chain: Large ribosomal subunit protein uL14c (122 aa).

The protein belongs to the universal ribosomal protein uL14 family. As to quaternary structure, part of the 50S ribosomal subunit.

The protein resides in the plastid. The protein localises to the chloroplast. Functionally, binds to 23S rRNA. The chain is Large ribosomal subunit protein uL14c from Arabis hirsuta (Hairy rock-cress).